The sequence spans 227 residues: GRF-interacting factor 1 (227 aa).

Residues 186–227 form a disordered region; that stretch reads RSGSGAKEGSTSLSVDVRGGTSSGAQSGDGEYLKVGTEEEGS.

This sequence belongs to the SS18 family. Interacts with several GRFs. Interacts with GRF10. Interacts with GRF1. As to expression, expressed in shoots, aerial roots, ears and tassels. Expressed in the shoot apical meristem (SAM), young leaf primordia, leaf margins, inflorescence meristem, floral meristem and spikelet meristem.

In terms of biological role, transcription coactivator that plays a role in the regulation of meristematic function in leaves, stems and inflorescences. Regulates shoot architecture and meristem determinacy. Binds to the inflorescence architecture gene UB3 (unbranched3). Regulates the expression of several genes involved in inflorescence architecture. Component of a network formed by the microRNA396 (miRNA396), the GRFs and their interacting factors (GIFs) acting in the regulation of meristem function, at least partially through the control of cell proliferation. Associates with the core SWI/SNF chromatin-remodeling complex and specific GRFs to tightly regulate the transition between cell division and cell expansion in growing leaves. The polypeptide is GRF-interacting factor 1 (Zea mays (Maize)).